Here is a 334-residue protein sequence, read N- to C-terminus: tRNA uridine(34) hydroxylase (334 aa).

Residues 123 to 217 (SDPDVILVDT…YLEEVKQEES (95 aa)) form the Rhodanese domain. Cys-177 acts as the Cysteine persulfide intermediate in catalysis.

This sequence belongs to the TrhO family.

It catalyses the reaction uridine(34) in tRNA + AH2 + O2 = 5-hydroxyuridine(34) in tRNA + A + H2O. In terms of biological role, catalyzes oxygen-dependent 5-hydroxyuridine (ho5U) modification at position 34 in tRNAs. This Shewanella putrefaciens (strain CN-32 / ATCC BAA-453) protein is tRNA uridine(34) hydroxylase.